A 106-amino-acid chain; its full sequence is Pyrimidine/purine nucleoside phosphorylase (106 aa).

Belongs to the nucleoside phosphorylase PpnP family.

It carries out the reaction a purine D-ribonucleoside + phosphate = a purine nucleobase + alpha-D-ribose 1-phosphate. It catalyses the reaction adenosine + phosphate = alpha-D-ribose 1-phosphate + adenine. The enzyme catalyses cytidine + phosphate = cytosine + alpha-D-ribose 1-phosphate. The catalysed reaction is guanosine + phosphate = alpha-D-ribose 1-phosphate + guanine. It carries out the reaction inosine + phosphate = alpha-D-ribose 1-phosphate + hypoxanthine. It catalyses the reaction thymidine + phosphate = 2-deoxy-alpha-D-ribose 1-phosphate + thymine. The enzyme catalyses uridine + phosphate = alpha-D-ribose 1-phosphate + uracil. The catalysed reaction is xanthosine + phosphate = alpha-D-ribose 1-phosphate + xanthine. Catalyzes the phosphorolysis of diverse nucleosides, yielding D-ribose 1-phosphate and the respective free bases. Can use uridine, adenosine, guanosine, cytidine, thymidine, inosine and xanthosine as substrates. Also catalyzes the reverse reactions. The protein is Pyrimidine/purine nucleoside phosphorylase of Burkholderia cenocepacia (strain ATCC BAA-245 / DSM 16553 / LMG 16656 / NCTC 13227 / J2315 / CF5610) (Burkholderia cepacia (strain J2315)).